The chain runs to 193 residues: Pyridoxal 5'-phosphate synthase subunit PdxT (193 aa).

Position 50-52 (50-52 (GES)) interacts with L-glutamine. Cysteine 82 (nucleophile) is an active-site residue. L-glutamine contacts are provided by residues arginine 109 and 136 to 137 (IR). Active-site charge relay system residues include histidine 172 and glutamate 174.

Belongs to the glutaminase PdxT/SNO family. As to quaternary structure, in the presence of PdxS, forms a dodecamer of heterodimers. Only shows activity in the heterodimer.

It catalyses the reaction aldehydo-D-ribose 5-phosphate + D-glyceraldehyde 3-phosphate + L-glutamine = pyridoxal 5'-phosphate + L-glutamate + phosphate + 3 H2O + H(+). It carries out the reaction L-glutamine + H2O = L-glutamate + NH4(+). It functions in the pathway cofactor biosynthesis; pyridoxal 5'-phosphate biosynthesis. Catalyzes the hydrolysis of glutamine to glutamate and ammonia as part of the biosynthesis of pyridoxal 5'-phosphate. The resulting ammonia molecule is channeled to the active site of PdxS. This Streptococcus pneumoniae serotype 2 (strain D39 / NCTC 7466) protein is Pyridoxal 5'-phosphate synthase subunit PdxT.